Consider the following 78-residue polypeptide: Neurogranin (78 aa).

Position 1 is an N-acetylmethionine (Met-1). The IQ domain occupies 26-49 (ANAAAAKIQASFRGHMARKKIKSG). The residue at position 36 (Ser-36) is a Phosphoserine; by PHK and PKC. The interval 38–78 (RGHMARKKIKSGERGRKGPGPGGPGGAGGARGGAGGGPSGD) is disordered. One can recognise a Collagen-like domain in the interval 50-78 (ERGRKGPGPGGPGGAGGARGGAGGGPSGD). Over residues 55–78 (GPGPGGPGGAGGARGGAGGGPSGD) the composition is skewed to gly residues. Residue Arg-68 is modified to Citrulline; partial. At Arg-68 the chain carries Omega-N-methylarginine.

This sequence belongs to the neurogranin family. In terms of processing, the N-terminus is blocked. Phosphorylated at Ser-36 by PHK and PKC. Phosphorylation prevents interaction with Calmodulin and interrupts several learning- and memory-associated functions. As to expression, is highly enriched in brain. Accumulates postsynaptically in dendritic spines of neostriatal neurons.

In terms of biological role, acts as a 'third messenger' substrate of protein kinase C-mediated molecular cascades during synaptic development and remodeling. Binds to calmodulin in the absence of calcium. This chain is Neurogranin (NRGN), found in Bos taurus (Bovine).